The sequence spans 379 residues: MDNLANQGVIVLAAGGTGGHLFPAEALAHELRARGWDVHLATDARAQRFVGAFAQDHVHVIRSATIAGRNPVALLKTFWSLWQGNLDSRKLFRRLKPKLVVGFGGYPTLPPLYAASNMGIPTLIHEQNAVMGRANKGLAGRVKAIAGGFLPENSGAYAAKTVITGNPVRPPVLVAAATPYTPAGKDDRFRLLVFGGSQGAQFFSQAIPAAVALLPEHERARLLITQQARKEDEASARQAYEKLGVPADVAPFFNDMPARMADAHFVIARSGASTVSEITVIGRPAMLVPFPHALDHDQAANAAALAAAGGAEVVRQADLSPQRLAEMLQSAMNEPERLEQQAKAAKSVGKPDAARLLADLAEAIASGKTVQEFKEGNRP.

Residues 17-19 (TGG), asparagine 128, arginine 169, serine 197, and glutamine 298 contribute to the UDP-N-acetyl-alpha-D-glucosamine site.

Belongs to the glycosyltransferase 28 family. MurG subfamily.

Its subcellular location is the cell inner membrane. The enzyme catalyses di-trans,octa-cis-undecaprenyl diphospho-N-acetyl-alpha-D-muramoyl-L-alanyl-D-glutamyl-meso-2,6-diaminopimeloyl-D-alanyl-D-alanine + UDP-N-acetyl-alpha-D-glucosamine = di-trans,octa-cis-undecaprenyl diphospho-[N-acetyl-alpha-D-glucosaminyl-(1-&gt;4)]-N-acetyl-alpha-D-muramoyl-L-alanyl-D-glutamyl-meso-2,6-diaminopimeloyl-D-alanyl-D-alanine + UDP + H(+). It functions in the pathway cell wall biogenesis; peptidoglycan biosynthesis. In terms of biological role, cell wall formation. Catalyzes the transfer of a GlcNAc subunit on undecaprenyl-pyrophosphoryl-MurNAc-pentapeptide (lipid intermediate I) to form undecaprenyl-pyrophosphoryl-MurNAc-(pentapeptide)GlcNAc (lipid intermediate II). In Brucella suis (strain ATCC 23445 / NCTC 10510), this protein is UDP-N-acetylglucosamine--N-acetylmuramyl-(pentapeptide) pyrophosphoryl-undecaprenol N-acetylglucosamine transferase.